A 166-amino-acid polypeptide reads, in one-letter code: Large ribosomal subunit protein mL49 (166 aa).

A disordered region spans residues 56-78 (RIPDPPKHEHYPTPSGWQPPRDP).

This sequence belongs to the mitochondrion-specific ribosomal protein mL49 family. In terms of assembly, component of the mitochondrial large ribosomal subunit (mt-LSU). Mature mammalian 55S mitochondrial ribosomes consist of a small (28S) and a large (39S) subunit. The 28S small subunit contains a 12S ribosomal RNA (12S mt-rRNA) and 30 different proteins. The 39S large subunit contains a 16S rRNA (16S mt-rRNA), a copy of mitochondrial valine transfer RNA (mt-tRNA(Val)), which plays an integral structural role, and 52 different proteins. Interacts with OXA1L. Ubiquitous.

The protein resides in the mitochondrion. This is Large ribosomal subunit protein mL49 (MRPL49) from Homo sapiens (Human).